We begin with the raw amino-acid sequence, 410 residues long: D-3-phosphoglycerate dehydrogenase (410 aa).

Residues 161–162 (HI), aspartate 181, 238–240 (ASR), and aspartate 264 each bind NAD(+). Residue arginine 240 is part of the active site. Glutamate 269 is a catalytic residue. Histidine 292 (proton donor) is an active-site residue. 292–295 (HIGG) is an NAD(+) binding site. The ACT domain maps to 339-410 (RLMHIHENRP…PGTIRARLLY (72 aa)).

It belongs to the D-isomer specific 2-hydroxyacid dehydrogenase family. Homotetramer.

The catalysed reaction is (2R)-3-phosphoglycerate + NAD(+) = 3-phosphooxypyruvate + NADH + H(+). The enzyme catalyses (R)-2-hydroxyglutarate + NAD(+) = 2-oxoglutarate + NADH + H(+). Its pathway is amino-acid biosynthesis; L-serine biosynthesis; L-serine from 3-phospho-D-glycerate: step 1/3. With respect to regulation, in bacteria displays feedback inhibition by L-serine. In terms of biological role, catalyzes the reversible oxidation of 3-phospho-D-glycerate to 3-phosphonooxypyruvate, the first step of the phosphorylated L-serine biosynthesis pathway. Also catalyzes the reversible oxidation of 2-hydroxyglutarate to 2-oxoglutarate. The protein is D-3-phosphoglycerate dehydrogenase (serA) of Escherichia coli O6:H1 (strain CFT073 / ATCC 700928 / UPEC).